A 413-amino-acid polypeptide reads, in one-letter code: MAEGEDGSWWRSWLQQSYTSVRDKSAETLEFMKRDLTEFSRVVHHDTACTIAATASVVKEKLVVEGSSGTTEKVKKGLSDFLGVISDTFAPSPDKTIDCDVITLMATPSGTTELYDGTKARLYSLQSDPATYCNEPDGFPAEFDAWLAYWDPEQRKAEISELLVTSPSIRALFTKMVPAAVSHSEFWQRYFYKVHQLEQEEARRDALKQRADQSVHSEEPTWEEEEEDFVGAGSAPALKLEEKYVLSTPTIPTLHVEDKSEKTAELNRDHTSFTSPSESSESISPITQIANPEYIEQTPSKEPSPGTLTVTKENTGAGTDETSAPAPLEQKTGKSNTQMATQREDPPSDLRVFELNSDSGKSTPSNNGQKGSSTDISEDWEKEFDMTEEEVQLALSTVEVSGEVEDEDWENWE.

The BSD domain maps to 146–198 (WLAYWDPEQRKAEISELLVTSPSIRALFTKMVPAAVSHSEFWQRYFYKVHQLE). Composition is skewed to basic and acidic residues over residues 208-219 (KQRADQSVHSEE) and 255-271 (HVEDKSEKTAELNRDHT). 2 disordered regions span residues 208–228 (KQRADQSVHSEEPTWEEEEED) and 255–386 (HVED…EFDM). Residues 274-287 (TSPSESSESISPIT) show a composition bias toward low complexity. The segment covering 297-322 (QTPSKEPSPGTLTVTKENTGAGTDET) has biased composition (polar residues). Over residues 342-352 (QREDPPSDLRV) the composition is skewed to basic and acidic residues. Over residues 356 to 375 (NSDSGKSTPSNNGQKGSSTD) the composition is skewed to polar residues. Acidic residues predominate over residues 376–386 (ISEDWEKEFDM).

The chain is BSD domain-containing protein 1-A (bsdc1-a) from Xenopus laevis (African clawed frog).